We begin with the raw amino-acid sequence, 89 residues long: Large ribosomal subunit protein bL27 (89 aa).

Positions 1–21 (MAHKKAGGSSRNGRDSESKRL) are disordered.

This sequence belongs to the bacterial ribosomal protein bL27 family.

This is Large ribosomal subunit protein bL27 from Bartonella quintana (strain Toulouse) (Rochalimaea quintana).